A 1443-amino-acid chain; its full sequence is Sterol 3-beta-glucosyltransferase ATG26 (1443 aa).

The segment covering 1-13 has biased composition (low complexity); sequence MATQADDAAASQA. Disordered regions lie at residues 1–69 and 88–187; these read MATQ…MFMN and NDRF…LTLT. The segment covering 18–32 has biased composition (basic and acidic residues); that stretch reads GDLKEHVHDELDKIQ. Residues 49-58 show a composition bias toward acidic residues; sequence DSEDSDDEDN. Residues 104–117 are compositionally biased toward polar residues; it reads QNTRTESIARTSIL. A compositionally biased stretch (basic residues) spans 125–134; that stretch reads DKVHRRRKLS. Positions 164 to 173 are enriched in acidic residues; the sequence is EVADEADDEH. The GRAM 1 domain occupies 240–284; the sequence is LKEIFEFDEYEQVIEEYPCWLLQSVLLQGYMYITSKHICFYAYLP. The PH domain occupies 289–385; the sequence is EAVKSGYLSK…WVKSLQRVIF (97 aa). The tract at residues 463-657 is disordered; sequence EQVITGDDHD…HGDRHHGIPH (195 aa). Residues 506 to 525 show a composition bias toward low complexity; the sequence is LAPMSPLSPRSPSQLSPRAS. The span at 585-614 shows a compositional bias: polar residues; the sequence is SFLQSSIENPSISTLSPSSYDEPSASQILQ. Basic residues predominate over residues 631–642; that stretch reads SRKRDRSGKRTP. A GRAM 2 domain is found at 765-870; it reads RFRAHFALPE…DCAVTLHQLM (106 aa). The stretch at 883 to 910 forms a coiled coil; it reads DQEEQDDEEAAAAMAERDELQEARQDEF. Residues S957, R958, D960, A1265, H1267, H1280, S1283, G1284, T1285, D1304, and Q1305 each contribute to the UDP-alpha-D-glucose site. The tract at residues 1385 to 1443 is disordered; the sequence is NAEHGLAEDDDDTEESWTFVGRDEPDPDAVTKKLSDGLAGLGAAGDRPPPLGSQAPTVA. Residues 1405–1419 are compositionally biased toward basic and acidic residues; it reads GRDEPDPDAVTKKLS.

Belongs to the glycosyltransferase 28 family.

The protein localises to the cytoplasm. The protein resides in the preautophagosomal structure membrane. The catalysed reaction is a sterol + UDP-alpha-D-glucose = a sterol 3-beta-D-glucoside + UDP + H(+). It carries out the reaction ergosterol + UDP-alpha-D-glucose = ergosteryl 3-beta-D-glucoside + UDP + H(+). In terms of biological role, sterol glycosyltransferase responsible for the glycosylation of ergosterol to form ergosterol-glucoside. The chain is Sterol 3-beta-glucosyltransferase ATG26 from Gibberella zeae (strain ATCC MYA-4620 / CBS 123657 / FGSC 9075 / NRRL 31084 / PH-1) (Wheat head blight fungus).